The following is a 244-amino-acid chain: tRNA (guanine-N(1)-)-methyltransferase (244 aa).

S-adenosyl-L-methionine is bound by residues Gly-112 and 131-136; that span reads IGDFIV.

It belongs to the RNA methyltransferase TrmD family. Homodimer.

The protein localises to the cytoplasm. It carries out the reaction guanosine(37) in tRNA + S-adenosyl-L-methionine = N(1)-methylguanosine(37) in tRNA + S-adenosyl-L-homocysteine + H(+). Its function is as follows. Specifically methylates guanosine-37 in various tRNAs. The chain is tRNA (guanine-N(1)-)-methyltransferase from Clostridium kluyveri (strain NBRC 12016).